Reading from the N-terminus, the 356-residue chain is D-alanine--D-alanine ligase (356 aa).

The 206-residue stretch at Lys-134–Glu-339 folds into the ATP-grasp domain. Asn-167 to Glu-222 contributes to the ATP binding site. Residues Asp-293, Glu-306, and Asn-308 each contribute to the Mg(2+) site.

This sequence belongs to the D-alanine--D-alanine ligase family. It depends on Mg(2+) as a cofactor. The cofactor is Mn(2+).

The protein localises to the cytoplasm. It catalyses the reaction 2 D-alanine + ATP = D-alanyl-D-alanine + ADP + phosphate + H(+). It functions in the pathway cell wall biogenesis; peptidoglycan biosynthesis. Cell wall formation. The chain is D-alanine--D-alanine ligase from Staphylococcus aureus (strain Mu3 / ATCC 700698).